We begin with the raw amino-acid sequence, 387 residues long: MASVTITSVHEPANPLAVAHTGEREVEGDQLIKTDTNNDNDIINTLLNNFLYPQELKHNVFVPRFQQRITIVKAWDILSLSTSPPNGTNGANGTNSAPHRPKDLHILDIGCGQGESAATMAALLQPHMHGARLHITGIDTARPDYGTPYTVAETHAHLTASALGRHISFRREDAAAFFSPSRLSSPSPPGSWPSAANVDAVTLCHSLWYFPTPQSVADLFTTLAGARVPRVYLAEYSFRGSLPGGQQDAHILAARAQALLHASVLEKLSADSSQQNHQGREPGPRAPNVRAALDVGSIVEAAAAAGWAVRRQGTFVPAADMIEGHLEARLVVKDAFAEAVRAEGLSPEREHEVLGLVPGVKEAFARLAEAGVAKGRAMDVWWAELER.

The segment at 98-223 (PHRPKDLHIL…QSVADLFTTL (126 aa)) is methyltransferase domain.

The protein belongs to the class I-like SAM-binding methyltransferase superfamily. Erg6/SMT family.

It functions in the pathway mycotoxin biosynthesis. Its function is as follows. Methyltransferase; part of the gene cluster that mediates the biosynthesis of the phomopsins, a group of hexapeptide mycotoxins which infects lupins and causes lupinosis disease in livestock. Within the pathway, phomM' acts as an S-adenosylmethionine-dependent alpha-N-methyltransferase that catalyzes two successive N-methylation reactions, converting N-desmethyl-phomopsin A to phomopsin A and phomopsin A further to an N,N-dimethylated congener called phomopsin E. The pathway starts with the processing of the precursor phomA' by several endopeptidases including kexin proteases as well as the cluster-specific S41 family peptidase phomP1 and the oligopeptidase phomG' to produce 10 identical copies of the hexapeptide Tyr-Val-Ile-Pro-Ile-Asp. After being excised from the precursor peptide, the core peptides are cyclized and modified post-translationally by enzymes encoded within the gene cluster. The timing and order of proteolysis of the phomA' precursor and PTMs are still unknown. Two tyrosinase-like enzymes, phomQ1' and phomQ2, catalyze the chlorination and hydroxylation of Tyr, respectively. PhomYb, is proposed to be involved in the construction of the macrocyclic structure. The other 4 ustYa family proteins may be involved in PTMs that generate the unique structure of phomopsin A. PhomYa' is required for the hydroxylation of C-beta of Tyr. PhomYc', phomYd', and phomYe are responsible for the biosynthesis of 2,3-dehydroisoleucine (dIle), 2,3-dehydroaspartic acid (dAsp), and 3,4-dehydroproline (dPro), respectively. While dIle formation by phomYc' is indispensable for the installation of dAsp by phomYd', the order of the other PTMs have not been elucidated yet. Most of the biosynthetic enzymes likely have broad substrate specificity, and thus, there might be a metabolic grid from a precursor to phomopsin A. The enzyme(s) responsible for the biosynthesis of 3,4-dehydrovaline (dVal) have also not been identified yet. Finally, phomM' acts as an S-adenosylmethionine-dependent alpha-N-methyltransferase that catalyzes two successive N-methylation reactions, converting N-desmethyl-phomopsin A to phomopsin A and phomopsin A further to an N,N-dimethylated congener called phomopsin E. The polypeptide is Methyltransferase phomM' (Diaporthe leptostromiformis (Lupinosis disease fungus)).